A 536-amino-acid polypeptide reads, in one-letter code: CTP synthase (536 aa).

The amidoligase domain stretch occupies residues Met1–Ile266. Residue Ser14 coordinates CTP. Ser14 provides a ligand contact to UTP. ATP is bound by residues Ser15–Leu20 and Asp72. Mg(2+) contacts are provided by Asp72 and Glu140. Residues Asp147–Glu149, Lys187–Gln192, and Lys223 contribute to the CTP site. UTP is bound by residues Lys187–Gln192 and Lys223. The Glutamine amidotransferase type-1 domain maps to Arg292 to Lys534. Gly354 contacts L-glutamine. Cys381 (nucleophile; for glutamine hydrolysis) is an active-site residue. Residues Leu382 to Gln385, Glu405, and Arg462 each bind L-glutamine. Active-site residues include His507 and Glu509.

Belongs to the CTP synthase family. Homotetramer.

The catalysed reaction is UTP + L-glutamine + ATP + H2O = CTP + L-glutamate + ADP + phosphate + 2 H(+). It catalyses the reaction L-glutamine + H2O = L-glutamate + NH4(+). The enzyme catalyses UTP + NH4(+) + ATP = CTP + ADP + phosphate + 2 H(+). Its pathway is pyrimidine metabolism; CTP biosynthesis via de novo pathway; CTP from UDP: step 2/2. With respect to regulation, allosterically activated by GTP, when glutamine is the substrate; GTP has no effect on the reaction when ammonia is the substrate. The allosteric effector GTP functions by stabilizing the protein conformation that binds the tetrahedral intermediate(s) formed during glutamine hydrolysis. Inhibited by the product CTP, via allosteric rather than competitive inhibition. Its function is as follows. Catalyzes the ATP-dependent amination of UTP to CTP with either L-glutamine or ammonia as the source of nitrogen. Regulates intracellular CTP levels through interactions with the four ribonucleotide triphosphates. In Geobacter sulfurreducens (strain ATCC 51573 / DSM 12127 / PCA), this protein is CTP synthase.